The sequence spans 1608 residues: Adenylate cyclase type 10 (1608 aa).

2 Guanylate cyclase domains span residues 42–179 (VLMF…RLAQ) and 293–418 (TIVF…ARMM). The Mg(2+) site is built by Asp-47 and Ile-48. 47–52 (DISGFT) is a binding site for ATP. Lys-95 provides a ligand contact to hydrogencarbonate. Asp-99 lines the Mg(2+) pocket. ATP contacts are provided by Asp-99 and Lys-144. Val-167, Arg-176, and Met-337 together coordinate hydrogencarbonate. ATP-binding positions include Val-406 and 412–416 (NIAAR).

This sequence belongs to the adenylyl cyclase class-4/guanylyl cyclase family. Mg(2+) serves as cofactor. Mn(2+) is required as a cofactor. Cleavage may occur to generate the active 48 kDa form. In terms of tissue distribution, detected in testis (at protein level). Preferentially expressed in testis.

It is found in the cell membrane. It localises to the cytoplasm. Its subcellular location is the cytoskeleton. The protein localises to the perinuclear region. The protein resides in the nucleus. It is found in the cell projection. It localises to the cilium. Its subcellular location is the mitochondrion. The enzyme catalyses ATP = 3',5'-cyclic AMP + diphosphate. Its activity is regulated as follows. Activated by manganese or magnesium ions. In the presence of magnesium ions, the enzyme is activated by bicarbonate. Calcium mildly increases the enzyme activity, also in the presence of magnesium ions. Functionally, catalyzes the formation of the signaling molecule cAMP. May function as sensor that mediates responses to changes in cellular bicarbonate and CO(2) levels. Has a critical role in mammalian spermatogenesis by producing the cAMP which regulates cAMP-responsive nuclear factors indispensable for sperm maturation in the epididymis. Induces capacitation, the maturational process that sperm undergo prior to fertilization. Involved in ciliary beat regulation. The chain is Adenylate cyclase type 10 (Adcy10) from Rattus norvegicus (Rat).